Here is a 288-residue protein sequence, read N- to C-terminus: Probable prolyl 4-hydroxylase 9 (288 aa).

The Cytoplasmic segment spans residues 1–12; that stretch reads MKSRLKSYRRKK. The chain crosses the membrane as a helical; Signal-anchor for type II membrane protein span at residues 13-33; the sequence is LGLATVIVFCSLCFLFGFYGS. At 34–288 the chain is on the lumenal side; it reads TLLSQNVPRV…KWIRDQDQEE (255 aa). In terms of domain architecture, Fe2OG dioxygenase spans 164–283; that stretch reads HGESFNILRY…KWVATKWIRD (120 aa). The Fe cation site is built by His182 and Asp184. Residues Asn221 and Asn255 are each glycosylated (N-linked (GlcNAc...) asparagine). His264 contributes to the Fe cation binding site. Lys274 is a binding site for 2-oxoglutarate.

It belongs to the P4HA family. It depends on Fe(2+) as a cofactor. Requires L-ascorbate as cofactor.

It localises to the endoplasmic reticulum membrane. It is found in the golgi apparatus. The catalysed reaction is L-prolyl-[collagen] + 2-oxoglutarate + O2 = trans-4-hydroxy-L-prolyl-[collagen] + succinate + CO2. Its function is as follows. Catalyzes the post-translational formation of 4-hydroxyproline in -Xaa-Pro-Gly- sequences in proline-rich peptide sequences of plant glycoproteins and other proteins. Hydroxyprolines are important constituent of many plant cell wall glycoproteins such as extensins, hydroxyproline-rich glycoproteins, lectins and arabinogalactan proteins. In Arabidopsis thaliana (Mouse-ear cress), this protein is Probable prolyl 4-hydroxylase 9.